A 521-amino-acid polypeptide reads, in one-letter code: Myocyte-specific enhancer factor 2D (521 aa).

The MADS-box domain maps to 3–57 (RKKIQIQRITDERNRQVTFTKRKFGLMKKAYELSVLCDCEIALIIFNHSNKLFQY). Residues 58–86 (ASTDMDKVLLKYTEYNEPHESRTNADIIE) constitute a DNA-binding region (mef2-type). Serine 98, serine 106, and serine 110 each carry phosphoserine. Residue serine 121 is modified to Phosphoserine; by PKA. Residues 174–207 (TDPRLLSPQQPALQRNSVSPGLPQRPASAGAMLG) form a disordered region. Serine 180 is subject to Phosphoserine; by MAPK7. Over residues 180 to 192 (SPQQPALQRNSVS) the composition is skewed to polar residues. A Phosphoserine; by PKA modification is found at serine 190. The residue at position 231 (serine 231) is a Phosphoserine. Residues 244-266 (NKVIPAKSPPPPTHSTQLGAPSR) form a disordered region. Lysine 245 is modified (N6-acetyllysine). Serine 251 is subject to Phosphoserine. The interval 286-292 (TEDHLDL) is beta domain. 2 disordered regions span residues 357–407 (SLGN…QSHL) and 437–521 (SIKS…WTLK). The segment covering 373-400 (PQQPQPPQQQPPQPQQPQPQQPQQPQQP) has biased composition (pro residues). N6-acetyllysine; alternate is present on lysine 439. Lysine 439 participates in a covalent cross-link: Glycyl lysine isopeptide (Lys-Gly) (interchain with G-Cter in SUMO); alternate. Phosphoserine is present on serine 444.

The protein belongs to the MEF2 family. As to quaternary structure, interacts with MYOG. Forms a complex with class II HDACs in undifferentiating cells. On myogenic differentiation, HDACs are released into the cytoplasm allowing MEF2s to interact with other proteins for activation. Interacts with HDAC4 (in undifferentiating cells); the interaction translocates MEF2D to nuclear dots. Forms a heterodimer with MEF2A. Interacts with MAPK7; the interaction phosphorylates but does not activate MEF2D. Interacts with CCAR2 and HDAC3. Post-translationally, phosphorylated on Ser-444 by CDK5 is required for Lys-439 sumoylation and inhibits transcriptional activity. In neurons, enhanced CDK5 activity induced by neurotoxins promotes caspase 3-mediated cleavage leading to neuron apoptosis. Phosphorylation on Ser-180 can be enhanced by EGF. Phosphorylated and activated by CaMK4. In terms of processing, acetylated on Lys-439 by CREBBP. Acetylated by EP300. Deacetylated by SIRT1 and HDAC3. Sumoylated on Lys-439 with SUMO2 but not SUMO1; which inhibits transcriptional activity and myogenic activity. Desumoylated by SENP3. Post-translationally, proteolytically cleaved in cerebellar granule neurons on several sites by caspase 7 following neurotoxicity. Preferentially cleaves the CDK5-mediated hyperphosphorylated form which leads to neuron apoptosis and transcriptional inactivation.

The protein resides in the nucleus. Its function is as follows. Transcriptional activator which binds specifically to the MEF2 element, 5'-YTA[AT](4)TAR-3', found in numerous muscle-specific, growth factor- and stress-induced genes. Mediates cellular functions not only in skeletal and cardiac muscle development, but also in neuronal differentiation and survival. Plays diverse roles in the control of cell growth, survival and apoptosis via p38 MAPK signaling in muscle-specific and/or growth factor-related transcription. Plays a critical role in the regulation of neuronal apoptosis. The protein is Myocyte-specific enhancer factor 2D (MEF2D) of Homo sapiens (Human).